The primary structure comprises 393 residues: NADH-quinone oxidoreductase subunit D (393 aa).

The protein belongs to the complex I 49 kDa subunit family. NDH-1 is composed of 14 different subunits. Subunits NuoB, C, D, E, F, and G constitute the peripheral sector of the complex.

It localises to the cell inner membrane. It catalyses the reaction a quinone + NADH + 5 H(+)(in) = a quinol + NAD(+) + 4 H(+)(out). Functionally, NDH-1 shuttles electrons from NADH, via FMN and iron-sulfur (Fe-S) centers, to quinones in the respiratory chain. The immediate electron acceptor for the enzyme in this species is believed to be ubiquinone. Couples the redox reaction to proton translocation (for every two electrons transferred, four hydrogen ions are translocated across the cytoplasmic membrane), and thus conserves the redox energy in a proton gradient. This Ehrlichia ruminantium (strain Gardel) protein is NADH-quinone oxidoreductase subunit D.